Consider the following 405-residue polypeptide: S-arrestin (405 aa).

Thr-234 bears the Phosphothreonine mark.

This sequence belongs to the arrestin family. In terms of assembly, monomer. Homodimer. Homotetramer. Interacts with RHO (via the phosphorylated C-terminus).

It is found in the cell projection. The protein localises to the cilium. The protein resides in the photoreceptor outer segment. Its subcellular location is the membrane. Its function is as follows. Binds to photoactivated, phosphorylated RHO and terminates RHO signaling via G-proteins by competing with G-proteins for the same binding site on RHO. May play a role in preventing light-dependent degeneration of retinal photoreceptor cells. The protein is S-arrestin (SAG) of Canis lupus familiaris (Dog).